The primary structure comprises 55 residues: uncharacterized protein (55 aa).

The disordered stretch occupies residues 1–25 (MKNNDKKKEVQRKYREEIKKKKQKN). The helical transmembrane segment at 35-55 (TIIVVTIIVLFIFFTYTLQGF) threads the bilayer.

The protein localises to the membrane. This is an uncharacterized protein from Bacillus subtilis (strain 168).